Here is a 172-residue protein sequence, read N- to C-terminus: Interferon tau-3 (172 aa).

Cystine bridges form between Cys1–Cys99 and Cys29–Cys139. Asn78 carries an N-linked (GlcNAc...) asparagine glycan.

The protein belongs to the alpha/beta interferon family. IFN-alphaII subfamily. In terms of tissue distribution, constitutively and exclusively expressed in the mononuclear cells of the extraembryonic trophectoderm.

It localises to the secreted. Functionally, paracrine hormone primarily responsible for maternal recognition of pregnancy. Interacts with endometrial receptors, probably type I interferon receptors, and blocks estrogen receptor expression, preventing the estrogen-induced increase in oxytocin receptor expression in the endometrium. This results in the suppression of the pulsatile endometrial release of the luteolytic hormone prostaglandin F2-alpha, hindering the regression of the corpus luteum (luteolysis) and therefore a return to ovarian cyclicity. This, and a possible direct effect of IFN-tau on prostaglandin synthesis, leads in turn to continued ovarian progesterone secretion, which stimulates the secretion by the endometrium of the nutrients required for the growth of the conceptus. In summary, displays particularly high antiviral and antiproliferative potency concurrently with particular weak cytotoxicity, high antiluteolytic activity and immunomodulatory properties. In contrast with other IFNs, IFN-tau is not virally inducible. This is Interferon tau-3 (IFNT3) from Bos taurus (Bovine).